Reading from the N-terminus, the 330-residue chain is Ferredoxin--NADP reductase (330 aa).

FAD is bound by residues Thr-19, Asp-38, Gln-46, Tyr-51, Ala-91, Phe-129, Asp-286, and Ser-327.

It belongs to the ferredoxin--NADP reductase type 2 family. In terms of assembly, homodimer. It depends on FAD as a cofactor.

The catalysed reaction is 2 reduced [2Fe-2S]-[ferredoxin] + NADP(+) + H(+) = 2 oxidized [2Fe-2S]-[ferredoxin] + NADPH. In Nocardioides sp. (strain ATCC BAA-499 / JS614), this protein is Ferredoxin--NADP reductase.